Consider the following 127-residue polypeptide: Anti-adapter protein IraD (127 aa).

Belongs to the GpW/Gp25 family. IraD subfamily. As to quaternary structure, interacts with RssB.

Its subcellular location is the cytoplasm. Functionally, inhibits RpoS proteolysis by regulating RssB activity, thereby increasing the stability of the sigma stress factor RpoS during oxidative stress. Its effect on RpoS stability is due to its interaction with RssB, which probably blocks the interaction of RssB with RpoS, and the consequent delivery of the RssB-RpoS complex to the ClpXP protein degradation pathway. In Escherichia coli O127:H6 (strain E2348/69 / EPEC), this protein is Anti-adapter protein IraD.